The sequence spans 362 residues: Protein RecA (362 aa).

67-74 (GPESSGKT) is an ATP binding site. Low complexity predominate over residues 337-356 (VADAPADSAPAPVAAVAPKA). Residues 337 to 362 (VADAPADSAPAPVAAVAPKASARKSA) are disordered.

It belongs to the RecA family.

Its subcellular location is the cytoplasm. In terms of biological role, can catalyze the hydrolysis of ATP in the presence of single-stranded DNA, the ATP-dependent uptake of single-stranded DNA by duplex DNA, and the ATP-dependent hybridization of homologous single-stranded DNAs. It interacts with LexA causing its activation and leading to its autocatalytic cleavage. This is Protein RecA from Clavibacter michiganensis subsp. michiganensis (strain NCPPB 382).